The primary structure comprises 404 residues: Cysteine desulfurase IscS (404 aa).

Residues 75 to 76 (AT), Asn155, Gln183, and 203 to 205 (SGH) each bind pyridoxal 5'-phosphate. Residue Lys206 is modified to N6-(pyridoxal phosphate)lysine. Pyridoxal 5'-phosphate is bound at residue Thr243. The active-site Cysteine persulfide intermediate is the Cys328. Cys328 is a [2Fe-2S] cluster binding site.

This sequence belongs to the class-V pyridoxal-phosphate-dependent aminotransferase family. NifS/IscS subfamily. In terms of assembly, homodimer. Forms a heterotetramer with IscU, interacts with other sulfur acceptors. Pyridoxal 5'-phosphate serves as cofactor.

It localises to the cytoplasm. It catalyses the reaction (sulfur carrier)-H + L-cysteine = (sulfur carrier)-SH + L-alanine. The protein operates within cofactor biosynthesis; iron-sulfur cluster biosynthesis. Master enzyme that delivers sulfur to a number of partners involved in Fe-S cluster assembly, tRNA modification or cofactor biosynthesis. Catalyzes the removal of elemental sulfur atoms from cysteine to produce alanine. Functions as a sulfur delivery protein for Fe-S cluster synthesis onto IscU, an Fe-S scaffold assembly protein, as well as other S acceptor proteins. The chain is Cysteine desulfurase IscS from Edwardsiella ictaluri (strain 93-146).